The chain runs to 344 residues: Protein YRO2 (344 aa).

The Extracellular segment spans residues 1-34 (MSDYVELLKRGGNEAIKINPPTGADFHITSRGSD). Residues 35–55 (WLFTVFCVNLLFGVILVPLMF) form a helical membrane-spanning segment. At 56–62 (RKPVKDR) the chain is on the cytoplasmic side. Residues 63 to 83 (FVYYTAIAPNLFMSIAYFTMA) form a helical membrane-spanning segment. At 84–119 (SNLGWIPVRAKYNHVQTSTQKEHPGYRQIFYARYVG) the chain is on the extracellular side. The helical transmembrane segment at 120–140 (WFLAFPWPIIQMSLLGGTPLW) threads the bilayer. Glutamine 141 is a topological domain (cytoplasmic). A helical transmembrane segment spans residues 142 to 162 (IAFNVGMTEIFTVCWLIAACV). The Extracellular portion of the chain corresponds to 163–172 (HSTYKWGYYT). Residues 173-193 (IGIGAAIVVCISLMTTTFNLV) form a helical membrane-spanning segment. Residues 194–202 (KARGKDVSN) are Cytoplasmic-facing. A helical membrane pass occupies residues 203 to 223 (VFITFMSVIMFLWLIAYPTCF). Over 224 to 238 (GITDGGNVLQPDSAT) the chain is Extracellular. A helical membrane pass occupies residues 239 to 259 (IFYGIIDLLILSILPVLFMPL). Over 260 to 344 (ANYLGIERLG…EEEDVATDSE (85 aa)) the chain is Cytoplasmic. Residues 282–344 (PVAEKKMPSP…EEEDVATDSE (63 aa)) form a disordered region. A Glycyl lysine isopeptide (Lys-Gly) (interchain with G-Cter in ubiquitin) cross-link involves residue lysine 286. A Phosphoserine modification is found at serine 293. Over residues 297–306 (SDSDSSIKEK) the composition is skewed to basic and acidic residues. Basic residues predominate over residues 307 to 330 (LKLKKKHKKDKKKAKKAKKAKKAK). Positions 334 to 344 (EEEEDVATDSE) are enriched in acidic residues. The residue at position 341 (threonine 341) is a Phosphothreonine. Position 343 is a phosphoserine (serine 343).

The protein belongs to the archaeal/bacterial/fungal opsin family.

Its subcellular location is the membrane. In Saccharomyces cerevisiae (strain ATCC 204508 / S288c) (Baker's yeast), this protein is Protein YRO2 (YRO2).